Consider the following 127-residue polypeptide: Glycine cleavage system H protein (127 aa).

Residues 24 to 105 (TALVGITDFA…YNEGWIVKMK (82 aa)) enclose the Lipoyl-binding domain. Lysine 65 is modified (N6-lipoyllysine).

The protein belongs to the GcvH family. In terms of assembly, the glycine cleavage system is composed of four proteins: P, T, L and H. (R)-lipoate is required as a cofactor.

Functionally, the glycine cleavage system catalyzes the degradation of glycine. The H protein shuttles the methylamine group of glycine from the P protein to the T protein. The chain is Glycine cleavage system H protein from Chlorobaculum tepidum (strain ATCC 49652 / DSM 12025 / NBRC 103806 / TLS) (Chlorobium tepidum).